A 732-amino-acid chain; its full sequence is Adducin-related protein 1 (732 aa).

Disordered regions lie at residues 1-22 (MIGR…DPEY) and 684-732 (TRFS…KKDK). Polar residues predominate over residues 685 to 705 (RFSSTQGTSEGNTTSRSCTTA). Residues 716–732 (KKKKKKGFLSFMRKKDK) are compositionally biased toward basic residues.

It belongs to the aldolase class II family. Adducin subfamily.

The protein resides in the cytoplasm. Its subcellular location is the cytoskeleton. The protein localises to the cell membrane. In terms of biological role, membrane-cytoskeleton-associated protein that promotes the assembly of the spectrin-actin network. Plays a role in time-dependent memmory loss and the retention of conditioned behavior over time. This chain is Adducin-related protein 1, found in Caenorhabditis elegans.